A 296-amino-acid chain; its full sequence is Ribosomal protein L11 methyltransferase (296 aa).

Residues T151, G172, D194, and N233 each coordinate S-adenosyl-L-methionine.

The protein belongs to the methyltransferase superfamily. PrmA family.

It is found in the cytoplasm. It catalyses the reaction L-lysyl-[protein] + 3 S-adenosyl-L-methionine = N(6),N(6),N(6)-trimethyl-L-lysyl-[protein] + 3 S-adenosyl-L-homocysteine + 3 H(+). Methylates ribosomal protein L11. The chain is Ribosomal protein L11 methyltransferase from Thiobacillus denitrificans (strain ATCC 25259 / T1).